The primary structure comprises 79 residues: Dolichyl-diphosphooligosaccharide--protein glycosyltransferase subunit TMEM258 (79 aa).

2 helical membrane passes run 18–38 (LPLL…AFTM) and 55–75 (FIAA…LLWV).

Belongs to the OST5 family. In terms of assembly, component of the oligosaccharyltransferase (OST) complex.

The protein resides in the membrane. Its pathway is protein modification; protein glycosylation. Its function is as follows. Subunit of the oligosaccharyl transferase (OST) complex that catalyzes the initial transfer of a defined glycan (Glc(3)Man(9)GlcNAc(2) in eukaryotes) from the lipid carrier dolichol-pyrophosphate to an asparagine residue within an Asn-X-Ser/Thr consensus motif in nascent polypeptide chains, the first step in protein N-glycosylation. N-glycosylation occurs cotranslationally and the complex associates with the Sec61 complex at the channel-forming translocon complex that mediates protein translocation across the endoplasmic reticulum (ER). All subunits are required for a maximal enzyme activity. The polypeptide is Dolichyl-diphosphooligosaccharide--protein glycosyltransferase subunit TMEM258 (Caenorhabditis briggsae).